Consider the following 301-residue polypeptide: Phosducin-like protein (301 aa).

Thr-2 is subject to N-acetylthreonine. Residues 15 to 60 (YYYSTSEDEDSDHEDKDRGRGAPASSSTPAEAELAGEGISVNTGPK) form a disordered region. Phosphoserine is present on residues Ser-20 and Ser-25. A compositionally biased stretch (low complexity) spans 36 to 49 (APASSSTPAEAELA). Residues 36 to 299 (APASSSTPAE…TCHSEDSDLE (264 aa)) enclose the Phosducin domain. The thioredoxin fold stretch occupies residues 158–301 (FKQVLEIPSG…HSEDSDLEID (144 aa)). Residues Ser-226, Ser-293, and Ser-296 each carry the phosphoserine modification.

This sequence belongs to the phosducin family. As to quaternary structure, interacts with the CCT chaperonin complex. Forms a complex with the beta and gamma subunits of the GTP-binding protein, transducin.

It localises to the cell projection. Its subcellular location is the cilium. Its function is as follows. Functions as a co-chaperone for CCT in the assembly of heterotrimeric G protein complexes, facilitates the assembly of both Gbeta-Ggamma and RGS-Gbeta5 heterodimers. Also acts as a positive regulator of hedgehog signaling and regulates ciliary function. The protein is Phosducin-like protein (Pdcl) of Rattus norvegicus (Rat).